We begin with the raw amino-acid sequence, 509 residues long: uncharacterized protein (509 aa).

It belongs to the MG032/MG096/MG288 family.

This is an uncharacterized protein from Mycoplasma pneumoniae (strain ATCC 29342 / M129 / Subtype 1) (Mycoplasmoides pneumoniae).